We begin with the raw amino-acid sequence, 517 residues long: General transcription factor IIF subunit 1 (517 aa).

Alanine 2 carries the N-acetylalanine modification. Threonine 156 carries the post-translational modification Phosphothreonine. The tract at residues 178–458 (QQRRLKDQDQ…SGDVQVTEDA (281 aa)) is disordered. The span at 210–225 (LEDDLEMSSDDSEASG) shows a compositional bias: acidic residues. Phosphoserine is present on residues serine 217, serine 218, serine 221, and serine 224. Residues 232–251 (PKAKKKAPPSKGGRKKKKKK) show a composition bias toward basic residues. Composition is skewed to acidic residues over residues 255 to 270 (DEAF…EGQE) and 303 to 325 (EQSE…EEEE). Residue threonine 331 is modified to Phosphothreonine. Residues 343 to 355 (EESDSSEESDIDS) show a composition bias toward acidic residues. The segment covering 364-374 (AKKKTPPKRER) has biased composition (basic residues). Phosphoserine is present on residues serine 377, serine 380, serine 381, and serine 385. Positions 377 to 391 (SGGSSRGNSRPGTPS) are enriched in low complexity. Residue threonine 389 is modified to Phosphothreonine. Serine 391 bears the Phosphoserine mark. A compositionally biased stretch (polar residues) spans 392–401 (TEAGSTSSTL). The residue at position 407 (lysine 407) is an N6-acetyllysine. Residues 428–452 (GPQSLSGKSTPQPQSGKSTPSSGDV) show a composition bias toward polar residues. Residues serine 431, serine 433, and serine 436 each carry the phosphoserine modification. A phosphothreonine mark is found at threonine 437 and threonine 446. At serine 449 the chain carries Phosphoserine.

It belongs to the TFIIF alpha subunit family. Heterodimer of an alpha and a beta subunit. Interacts with GTF2F2, CTDP1, TAF6/TAFII80 and URI1. Interacts with GTF2B (via C-terminus and preferentially via acetylated form); this interaction prevents binding of GTF2B to GTF2F2. Part of TBP-based Pol II pre-initiation complex (PIC), in which Pol II core assembles with general transcription factors and other specific initiation factors including GTF2E1, GTF2E2, GTF2F1, GTF2F2, TCEA1, ERCC2, ERCC3, GTF2H2, GTF2H3, GTF2H4, GTF2H5, GTF2A1, GTF2A2, GTF2B and TBP; this large multi-subunit PIC complex mediates DNA unwinding and targets Pol II core to the transcription start site where the first phosphodiester bond forms. In terms of processing, phosphorylated on Ser and other residues by TAF1 and casein kinase II-like kinases.

Its subcellular location is the nucleus. TFIIF is a general transcription initiation factor that binds to RNA polymerase II and helps to recruit it to the initiation complex in collaboration with TFIIB. It promotes transcription elongation. This chain is General transcription factor IIF subunit 1 (GTF2F1), found in Bos taurus (Bovine).